We begin with the raw amino-acid sequence, 215 residues long: Protein LURP-one-related 16 (215 aa).

A lipid anchor (N-myristoyl glycine) is attached at Gly2.

It belongs to the LOR family.

Its function is as follows. Might be related to the phospholipid scramblase and tubby-like superfamily of membrane tethered transcription factors. This Arabidopsis thaliana (Mouse-ear cress) protein is Protein LURP-one-related 16.